Here is a 469-residue protein sequence, read N- to C-terminus: MKEFWQTCVSRLEQELPPQQISAWIRPLVPLAYDEAQAVLRVAAPNRFKLDWVRKNFSHQIEALAAEWYQRPVQVTFELPGTSSAPRIPMAVPRPVAVSVPAVVAAVQQASEPAPPAPASADAANIVYERSRLNTDLTFENFVTGKANQLARAAALQVAENPGTSYNPLFLYGGVGLGKTHLIHAIGNAMVAAGTGVRVRYVHADQYVSDVVKAYQRKAFDDFKRYYHSLDLLLIDDIQFFSGKNRTQEEFFYAFEAMVAQRKQIIITSDTYPKELSGIDSRLISRFDSGLTVAIEPPELEMRVAILLRKAESEGVPMPEEVAFFIAKHLRSNVRELEGALRKVLAYARFHGRDVLTVDVCKEALKDLLSVSNGQITVENIQKTVADFYKIKVADMYSKRRPANIALPRQVAMYLAKELTQKSLPEIGDLFGGRDHTTVLHAVRKISDARAKQAELNHTLHVLEQTLKG.

The domain I, interacts with DnaA modulators stretch occupies residues 1 to 71 (MKEFWQTCVS…EALAAEWYQR (71 aa)). The tract at residues 71–131 (RPVQVTFELP…DAANIVYERS (61 aa)) is domain II. The interval 132–348 (RLNTDLTFEN…GALRKVLAYA (217 aa)) is domain III, AAA+ region. The ATP site is built by G176, G178, K179, and T180. Positions 349 to 469 (RFHGRDVLTV…LHVLEQTLKG (121 aa)) are domain IV, binds dsDNA.

The protein belongs to the DnaA family. Oligomerizes as a right-handed, spiral filament on DNA at oriC.

Its subcellular location is the cytoplasm. In terms of biological role, plays an essential role in the initiation and regulation of chromosomal replication. ATP-DnaA binds to the origin of replication (oriC) to initiate formation of the DNA replication initiation complex once per cell cycle. Binds the DnaA box (a 9 base pair repeat at the origin) and separates the double-stranded (ds)DNA. Forms a right-handed helical filament on oriC DNA; dsDNA binds to the exterior of the filament while single-stranded (ss)DNA is stabiized in the filament's interior. The ATP-DnaA-oriC complex binds and stabilizes one strand of the AT-rich DNA unwinding element (DUE), permitting loading of DNA polymerase. After initiation quickly degrades to an ADP-DnaA complex that is not apt for DNA replication. Binds acidic phospholipids. The chain is Chromosomal replication initiator protein DnaA from Bordetella parapertussis (strain 12822 / ATCC BAA-587 / NCTC 13253).